The chain runs to 28 residues: Phospholipase A2 3 (28 aa).

It belongs to the phospholipase A2 family. Group I subfamily. Ca(2+) serves as cofactor. As to expression, expressed by the venom gland.

The protein resides in the secreted. The enzyme catalyses a 1,2-diacyl-sn-glycero-3-phosphocholine + H2O = a 1-acyl-sn-glycero-3-phosphocholine + a fatty acid + H(+). Snake venom phospholipase A2 (PLA2) that inhibits neuromuscular transmission by blocking acetylcholine release from the nerve termini. PLA2 catalyzes the calcium-dependent hydrolysis of the 2-acyl groups in 3-sn-phosphoglycerides. The chain is Phospholipase A2 3 from Micrurus nigrocinctus (Central American coral snake).